The chain runs to 54 residues: MARNDIRPIIKLKSTAGTGYTYVTRKNKRNNPDRITLKKFDPVIRKHVEFREER.

Belongs to the bacterial ribosomal protein bL33 family.

This is Large ribosomal subunit protein bL33 from Corynebacterium efficiens (strain DSM 44549 / YS-314 / AJ 12310 / JCM 11189 / NBRC 100395).